Here is a 287-residue protein sequence, read N- to C-terminus: Small ribosomal subunit biogenesis GTPase RsgA (287 aa).

The CP-type G domain maps to 61–218; sequence SSELIRPTVA…LVDTPGFTTL (158 aa). Residues 110–113 and 161–169 contribute to the GTP site; these read NKED and GPSGAGKST. Zn(2+)-binding residues include Cys-242, Cys-247, His-249, and Cys-255.

The protein belongs to the TRAFAC class YlqF/YawG GTPase family. RsgA subfamily. As to quaternary structure, monomer. Associates with 30S ribosomal subunit, binds 16S rRNA. It depends on Zn(2+) as a cofactor.

It is found in the cytoplasm. Functionally, one of several proteins that assist in the late maturation steps of the functional core of the 30S ribosomal subunit. Helps release RbfA from mature subunits. May play a role in the assembly of ribosomal proteins into the subunit. Circularly permuted GTPase that catalyzes slow GTP hydrolysis, GTPase activity is stimulated by the 30S ribosomal subunit. The polypeptide is Small ribosomal subunit biogenesis GTPase RsgA (Clostridium perfringens (strain SM101 / Type A)).